The following is a 520-amino-acid chain: MEELQGYLEKDRSRPFLYPLLFXEYSYALAHDRGLKGSLFYEPTEVFGYDSKSSLALLKRFVIRIYQQNYFLSVVNDSNKNRFVSHHHNNFXYSHXYSQMISEGCAILVEIPFSLRLXSYFEKKEIPKSHNLRSIHSIFPLSEGXLLHLXHVSDILIPHPIHMGILVQILQCWIQDVPLLHFLRFFLHKYHNWNSFLITPKKSIYVFSKENKRLFWFLYNSYVSECEFLLVFPRKQSSYLRLTSFGLFLERRHFHVKMEHLQMQHLILIVVCRDYFQGTLWSFKDPFMHYVRCQGKAVLASKGTHLLMKKWKYNFVNLWQYYFHFWYQSYRIHINQLSNYSFYFLGYLSSLLKNSLTVRNQMLENSFLMDTVTNKFETIVPVIFLIGSLSKAQFCTVSGHPISKPIWADLSDSEIIERFGRMCRNLSHYHSGSSKKQGLYRIKYILRLSCARTLARKHKSTVRTFLRRLGSGLLEEFFTEEEQVLSLILPKTIPFTFYGSHKERIWYLDIIRINDLVNHS.

It belongs to the intron maturase 2 family. MatK subfamily.

The protein localises to the plastid. It is found in the chloroplast. Functionally, usually encoded in the trnK tRNA gene intron. Probably assists in splicing its own and other chloroplast group II introns. The protein is Maturase K of Iris cristata (Dwarf crested iris).